The sequence spans 127 residues: Small ribosomal subunit protein uS11 (127 aa).

Belongs to the universal ribosomal protein uS11 family. In terms of assembly, part of the 30S ribosomal subunit. Interacts with proteins S7 and S18. Binds to IF-3.

In terms of biological role, located on the platform of the 30S subunit, it bridges several disparate RNA helices of the 16S rRNA. Forms part of the Shine-Dalgarno cleft in the 70S ribosome. The protein is Small ribosomal subunit protein uS11 of Ruthia magnifica subsp. Calyptogena magnifica.